Consider the following 217-residue polypeptide: Outer-membrane lipoprotein LolB (217 aa).

Positions 1–20 (MSKALRTLALSGLVLVGLSA) are cleaved as a signal peptide. A lipid anchor (N-palmitoyl cysteine) is attached at cysteine 21. Cysteine 21 carries S-diacylglycerol cysteine lipidation.

The protein belongs to the LolB family. As to quaternary structure, monomer.

It is found in the cell outer membrane. Its function is as follows. Plays a critical role in the incorporation of lipoproteins in the outer membrane after they are released by the LolA protein. This Xanthomonas oryzae pv. oryzae (strain MAFF 311018) protein is Outer-membrane lipoprotein LolB.